The chain runs to 408 residues: Argininosuccinate synthase (408 aa).

ATP-binding positions include 8–16 (AYSGGLDTT) and Ala35. L-citrulline-binding residues include Tyr86 and Ser91. An ATP-binding site is contributed by Gly116. L-aspartate is bound by residues Thr118, Asn122, and Asp123. Asn122 is an L-citrulline binding site. L-citrulline is bound by residues Arg126, Ser177, Ser186, Glu263, and Tyr275.

It belongs to the argininosuccinate synthase family. Type 1 subfamily. Homotetramer.

Its subcellular location is the cytoplasm. The enzyme catalyses L-citrulline + L-aspartate + ATP = 2-(N(omega)-L-arginino)succinate + AMP + diphosphate + H(+). It functions in the pathway amino-acid biosynthesis; L-arginine biosynthesis; L-arginine from L-ornithine and carbamoyl phosphate: step 2/3. The sequence is that of Argininosuccinate synthase from Lachnospira eligens (strain ATCC 27750 / DSM 3376 / VPI C15-48 / C15-B4) (Eubacterium eligens).